The primary structure comprises 495 residues: Aspartyl/glutamyl-tRNA(Asn/Gln) amidotransferase subunit B (495 aa).

This sequence belongs to the GatB/GatE family. GatB subfamily. In terms of assembly, heterotrimer of A, B and C subunits.

It carries out the reaction L-glutamyl-tRNA(Gln) + L-glutamine + ATP + H2O = L-glutaminyl-tRNA(Gln) + L-glutamate + ADP + phosphate + H(+). It catalyses the reaction L-aspartyl-tRNA(Asn) + L-glutamine + ATP + H2O = L-asparaginyl-tRNA(Asn) + L-glutamate + ADP + phosphate + 2 H(+). Allows the formation of correctly charged Asn-tRNA(Asn) or Gln-tRNA(Gln) through the transamidation of misacylated Asp-tRNA(Asn) or Glu-tRNA(Gln) in organisms which lack either or both of asparaginyl-tRNA or glutaminyl-tRNA synthetases. The reaction takes place in the presence of glutamine and ATP through an activated phospho-Asp-tRNA(Asn) or phospho-Glu-tRNA(Gln). This Halobacterium salinarum (strain ATCC 700922 / JCM 11081 / NRC-1) (Halobacterium halobium) protein is Aspartyl/glutamyl-tRNA(Asn/Gln) amidotransferase subunit B.